The primary structure comprises 410 residues: MLCIGITGGIGAGKSLLSSTFSQCGGIVVDGDVLAREVVQPGTKGLSSLVDAFGQDILLPGGALDRRALAVKAFRDDAARNVLNGIVHPLVANRRAEIIAAISEDAVVVEDIPLLVESGMAHLFPLVVVVHADVELRVRRLVEQRGVAETDARARIAAQASDEERRAVADVWLDNSSTPEVLVQRARDLWYHRILPFAYNLSQRQAVYAPAGLVTSDPIWLGQAKRIVARLKTTCGHKALRVDHIGSTAVPHYPGFPDFQAKDIIDIQITVESLAMADELADPLLSAGYPRLEHVTGDAAKTNARSTVDRYEHSSDPNLWHKRFHASADPGRPTYVHIRVAGWPNQQFGLLFVDWLKANPGVRADYLDVKRTADRLAAGDMGRYADAKEPWLLDAYRRAWEWADSTGWRL.

In terms of domain architecture, DPCK spans 3 to 201 (CIGITGGIGA…HRILPFAYNL (199 aa)). 11-16 (GAGKSL) lines the ATP pocket. The interval 196–410 (PFAYNLSQRQ…EWADSTGWRL (215 aa)) is UPF0157.

The protein in the N-terminal section; belongs to the CoaE family. It in the C-terminal section; belongs to the UPF0157 (GrpB) family.

The protein localises to the cytoplasm. It catalyses the reaction 3'-dephospho-CoA + ATP = ADP + CoA + H(+). It participates in cofactor biosynthesis; coenzyme A biosynthesis; CoA from (R)-pantothenate: step 5/5. In terms of biological role, catalyzes the phosphorylation of the 3'-hydroxyl group of dephosphocoenzyme A to form coenzyme A. The sequence is that of Dephospho-CoA kinase from Mycobacterium leprae (strain TN).